Here is a 243-residue protein sequence, read N- to C-terminus: Proteasome subunit beta (243 aa).

The disordered stretch occupies residues 1-46 (MFNPNNGSEFARNRARLDDTPNPYEPEVGSLPEGDRSQAGSDTVNK). Residues 1-48 (MFNPNNGSEFARNRARLDDTPNPYEPEVGSLPEGDRSQAGSDTVNKTG) constitute a propeptide, removed in mature form; by autocatalysis. Residue T49 is the Nucleophile of the active site.

This sequence belongs to the peptidase T1B family. The 20S proteasome core is composed of 14 alpha and 14 beta subunits that assemble into four stacked heptameric rings, resulting in a barrel-shaped structure. The two inner rings, each composed of seven catalytic beta subunits, are sandwiched by two outer rings, each composed of seven alpha subunits. The catalytic chamber with the active sites is on the inside of the barrel. Has a gated structure, the ends of the cylinder being occluded by the N-termini of the alpha-subunits. Is capped at one or both ends by the proteasome regulatory ATPase, PAN.

It localises to the cytoplasm. The enzyme catalyses Cleavage of peptide bonds with very broad specificity.. Its activity is regulated as follows. The formation of the proteasomal ATPase PAN-20S proteasome complex, via the docking of the C-termini of PAN into the intersubunit pockets in the alpha-rings, triggers opening of the gate for substrate entry. Interconversion between the open-gate and close-gate conformations leads to a dynamic regulation of the 20S proteasome proteolysis activity. In terms of biological role, component of the proteasome core, a large protease complex with broad specificity involved in protein degradation. In Halobacterium salinarum (strain ATCC 29341 / DSM 671 / R1), this protein is Proteasome subunit beta.